The sequence spans 429 residues: GTPase Obg (429 aa).

The Obg domain occupies 1-158 (MFVDQVKIYV…RNVQLELKVL (158 aa)). The disordered stretch occupies residues 124 to 145 (RGNKRFATPANPAPELSENGEP). The OBG-type G domain occupies 159-329 (ADVGLVGFPS…LLLAIADKLE (171 aa)). GTP-binding positions include 165 to 172 (GFPSVGKS), 190 to 194 (FTTIV), 212 to 215 (DLPG), 282 to 285 (NKMD), and 310 to 312 (SAV). 2 residues coordinate Mg(2+): Ser-172 and Thr-192. In terms of domain architecture, OCT spans 351 to 429 (KYIAEEPDFE…LLDYEFEFMD (79 aa)).

It belongs to the TRAFAC class OBG-HflX-like GTPase superfamily. OBG GTPase family. As to quaternary structure, monomer. The cofactor is Mg(2+).

The protein resides in the cytoplasm. Its function is as follows. An essential GTPase which binds GTP, GDP and possibly (p)ppGpp with moderate affinity, with high nucleotide exchange rates and a fairly low GTP hydrolysis rate. Plays a role in control of the cell cycle, stress response, ribosome biogenesis and in those bacteria that undergo differentiation, in morphogenesis control. The sequence is that of GTPase Obg from Listeria welshimeri serovar 6b (strain ATCC 35897 / DSM 20650 / CCUG 15529 / CIP 8149 / NCTC 11857 / SLCC 5334 / V8).